Consider the following 490-residue polypeptide: Betaine aldehyde dehydrogenase (490 aa).

Residue Asp93 participates in K(+) binding. 150-152 (GAW) is an NAD(+) binding site. Catalysis depends on Lys162, which acts as the Charge relay system. Residue 176 to 179 (KPSE) coordinates NAD(+). Val180 contributes to the K(+) binding site. 230-233 (GIAS) serves as a coordination point for NAD(+). Position 246 (Leu246) interacts with K(+). The active-site Proton acceptor is the Glu252. Gly254, Cys286, and Glu387 together coordinate NAD(+). Cys286 (nucleophile) is an active-site residue. Cys286 carries the post-translational modification Cysteine sulfenic acid (-SOH). Lys457 and Gly460 together coordinate K(+). Residue Glu464 is the Charge relay system of the active site.

It belongs to the aldehyde dehydrogenase family. In terms of assembly, dimer of dimers. Requires K(+) as cofactor.

The catalysed reaction is betaine aldehyde + NAD(+) + H2O = glycine betaine + NADH + 2 H(+). The protein operates within amine and polyamine biosynthesis; betaine biosynthesis via choline pathway; betaine from betaine aldehyde: step 1/1. Its function is as follows. Involved in the biosynthesis of the osmoprotectant glycine betaine. Catalyzes the irreversible oxidation of betaine aldehyde to the corresponding acid. This Yersinia pseudotuberculosis serotype O:1b (strain IP 31758) protein is Betaine aldehyde dehydrogenase.